The following is a 334-amino-acid chain: TPR repeat-containing protein YsoA (334 aa).

TPR repeat units lie at residues 17 to 50 (KDRL…DDTE), 52 to 84 (DLHL…GYGH), and 195 to 230 (HPII…EPSE).

The protein is TPR repeat-containing protein YsoA (ysoA) of Bacillus subtilis (strain 168).